Reading from the N-terminus, the 798-residue chain is Transferrin receptor protein 2 (798 aa).

Over 1–81 (MEQRWGLLRK…WAAAGRKAAP (81 aa)) the chain is Cytoplasmic. Residues 23–26 (YRRV) carry the Endocytosis signal motif. The tract at residues 25-44 (RVEGPQLENLEEEDREEGEE) is disordered. Residues 33-44 (NLEEEDREEGEE) show a composition bias toward acidic residues. Residues 82–102 (YLVLTTLLIFTGAFLLGYVAF) form a helical; Signal-anchor for type II membrane protein membrane-spanning segment. Residues 103-798 (RGSCQACGDS…GDVWNIDNNF (696 aa)) are Extracellular-facing. N-linked (GlcNAc...) asparagine glycosylation is found at Asn235, Asn334, and Asn535.

Belongs to the peptidase M28 family. M28B subfamily. In terms of assembly, homodimer.

Its subcellular location is the cell membrane. In terms of biological role, mediates cellular uptake of transferrin-bound iron in a non-iron dependent manner. May be involved in iron metabolism, hepatocyte function and erythrocyte differentiation. The protein is Transferrin receptor protein 2 (Tfr2) of Rattus norvegicus (Rat).